Reading from the N-terminus, the 484-residue chain is UDP-N-acetylmuramoyl-L-alanyl-D-glutamate--2,6-diaminopimelate ligase (484 aa).

Serine 30 contacts UDP-N-acetyl-alpha-D-muramoyl-L-alanyl-D-glutamate. ATP is bound at residue 111–117 (GTNGKTT). UDP-N-acetyl-alpha-D-muramoyl-L-alanyl-D-glutamate-binding positions include 153 to 154 (TT), serine 180, glutamine 186, and arginine 188. Position 220 is an N6-carboxylysine (lysine 220). Meso-2,6-diaminopimelate contacts are provided by residues arginine 378, 402 to 405 (DNPR), glycine 455, and glutamate 459. The Meso-diaminopimelate recognition motif signature appears at 402 to 405 (DNPR).

It belongs to the MurCDEF family. MurE subfamily. It depends on Mg(2+) as a cofactor. In terms of processing, carboxylation is probably crucial for Mg(2+) binding and, consequently, for the gamma-phosphate positioning of ATP.

The protein localises to the cytoplasm. The catalysed reaction is UDP-N-acetyl-alpha-D-muramoyl-L-alanyl-D-glutamate + meso-2,6-diaminopimelate + ATP = UDP-N-acetyl-alpha-D-muramoyl-L-alanyl-gamma-D-glutamyl-meso-2,6-diaminopimelate + ADP + phosphate + H(+). The protein operates within cell wall biogenesis; peptidoglycan biosynthesis. In terms of biological role, catalyzes the addition of meso-diaminopimelic acid to the nucleotide precursor UDP-N-acetylmuramoyl-L-alanyl-D-glutamate (UMAG) in the biosynthesis of bacterial cell-wall peptidoglycan. The sequence is that of UDP-N-acetylmuramoyl-L-alanyl-D-glutamate--2,6-diaminopimelate ligase from Phocaeicola vulgatus (strain ATCC 8482 / DSM 1447 / JCM 5826 / CCUG 4940 / NBRC 14291 / NCTC 11154) (Bacteroides vulgatus).